The following is a 131-amino-acid chain: Large ribosomal subunit protein bL17 (131 aa).

Belongs to the bacterial ribosomal protein bL17 family. As to quaternary structure, part of the 50S ribosomal subunit. Contacts protein L32.

The sequence is that of Large ribosomal subunit protein bL17 from Finegoldia magna (strain ATCC 29328 / DSM 20472 / WAL 2508) (Peptostreptococcus magnus).